A 605-amino-acid chain; its full sequence is Aspartate--tRNA(Asp/Asn) ligase (605 aa).

Residue Glu178 coordinates L-aspartate. Residues 202–205 (QLFK) form an aspartate region. Arg224 provides a ligand contact to L-aspartate. ATP is bound by residues 224–226 (RDE) and Gln233. Residue His458 coordinates L-aspartate. ATP is bound at residue Glu488. Arg495 serves as a coordination point for L-aspartate. Position 540–543 (540–543 (GLDR)) interacts with ATP. The tract at residues 580–605 (QQLKELHVTPAKPAKTTAKTKPRPAD) is disordered.

Belongs to the class-II aminoacyl-tRNA synthetase family. Type 1 subfamily. As to quaternary structure, homodimer.

Its subcellular location is the cytoplasm. The enzyme catalyses tRNA(Asx) + L-aspartate + ATP = L-aspartyl-tRNA(Asx) + AMP + diphosphate. Its function is as follows. Aspartyl-tRNA synthetase with relaxed tRNA specificity since it is able to aspartylate not only its cognate tRNA(Asp) but also tRNA(Asn). Reaction proceeds in two steps: L-aspartate is first activated by ATP to form Asp-AMP and then transferred to the acceptor end of tRNA(Asp/Asn). The chain is Aspartate--tRNA(Asp/Asn) ligase from Thermosynechococcus vestitus (strain NIES-2133 / IAM M-273 / BP-1).